We begin with the raw amino-acid sequence, 468 residues long: Probable Xaa-Pro aminopeptidase PEPP (468 aa).

Positions 264, 275, 398, and 438 each coordinate Mn(2+).

It belongs to the peptidase M24B family. It depends on Mn(2+) as a cofactor.

It carries out the reaction Release of any N-terminal amino acid, including proline, that is linked to proline, even from a dipeptide or tripeptide.. Catalyzes the removal of a penultimate prolyl residue from the N-termini of peptides. The polypeptide is Probable Xaa-Pro aminopeptidase PEPP (PEPP) (Paracoccidioides lutzii (strain ATCC MYA-826 / Pb01) (Paracoccidioides brasiliensis)).